We begin with the raw amino-acid sequence, 496 residues long: Aspartyl/glutamyl-tRNA(Asn/Gln) amidotransferase subunit B (496 aa).

This sequence belongs to the GatB/GatE family. GatB subfamily. As to quaternary structure, heterotrimer of A, B and C subunits.

It catalyses the reaction L-glutamyl-tRNA(Gln) + L-glutamine + ATP + H2O = L-glutaminyl-tRNA(Gln) + L-glutamate + ADP + phosphate + H(+). The catalysed reaction is L-aspartyl-tRNA(Asn) + L-glutamine + ATP + H2O = L-asparaginyl-tRNA(Asn) + L-glutamate + ADP + phosphate + 2 H(+). In terms of biological role, allows the formation of correctly charged Asn-tRNA(Asn) or Gln-tRNA(Gln) through the transamidation of misacylated Asp-tRNA(Asn) or Glu-tRNA(Gln) in organisms which lack either or both of asparaginyl-tRNA or glutaminyl-tRNA synthetases. The reaction takes place in the presence of glutamine and ATP through an activated phospho-Asp-tRNA(Asn) or phospho-Glu-tRNA(Gln). In Xanthobacter autotrophicus (strain ATCC BAA-1158 / Py2), this protein is Aspartyl/glutamyl-tRNA(Asn/Gln) amidotransferase subunit B.